Consider the following 898-residue polypeptide: Methionine--tRNA ligase, cytoplasmic (898 aa).

Residues 74–198 (GWEQDDLTNQ…VLKQQGVLAL (125 aa)) form the GST C-terminal domain. Positions 273–283 (PYVNNVPHLGN) match the 'HIGH' region motif. The short motif at 593–597 (KFSKS) is the 'KMSKS' region element. Lysine 596 contacts ATP. Serine 825 is subject to Phosphoserine. Threonine 833 is modified (phosphothreonine). Positions 839 to 895 (QIQALTEEVTKQGNIVRELKAQKADKNQIAAEVAKLLDLKKQLALAEGKPLETSKGK) constitute a WHEP-TRS domain.

The protein belongs to the class-I aminoacyl-tRNA synthetase family. Monomer. Part of a multisubunit complex that groups tRNA ligases for Arg (RARS1), Asp (DARS1), Gln (QARS1), Ile (IARS1), Leu (LARS1), Lys (KARS1), Met (MARS1) the bifunctional ligase for Glu and Pro (EPRS1) and the auxiliary subunits AIMP1/p43, AIMP2/p38 and EEF1E1/p18. Forms a linear complex that contains MARS1, EEF1E1, EPRS1 and AIMP2 that is at the core of the multisubunit complex.

It is found in the cytoplasm. The protein localises to the cytosol. Its subcellular location is the nucleus. The protein resides in the nucleolus. The enzyme catalyses tRNA(Met) + L-methionine + ATP = L-methionyl-tRNA(Met) + AMP + diphosphate. In terms of biological role, catalyzes the specific attachment of an amino acid to its cognate tRNA in a 2 step reaction: the amino acid (AA) is first activated by ATP to form AA-AMP and then transferred to the acceptor end of the tRNA. Plays a role in the synthesis of ribosomal RNA in the nucleolus. The polypeptide is Methionine--tRNA ligase, cytoplasmic (MARS1) (Bos taurus (Bovine)).